Reading from the N-terminus, the 240-residue chain is Large ribosomal subunit protein bL25 (240 aa).

The interval 1–23 (MATVKELKATARPKAGKGAARAE) is disordered. Low complexity predominate over residues 10 to 19 (TARPKAGKGA).

Belongs to the bacterial ribosomal protein bL25 family. CTC subfamily. Part of the 50S ribosomal subunit; part of the 5S rRNA/L5/L18/L25 subcomplex. Contacts the 5S rRNA. Binds to the 5S rRNA independently of L5 and L18.

This is one of the proteins that binds to the 5S RNA in the ribosome where it forms part of the central protuberance. The chain is Large ribosomal subunit protein bL25 from Afipia carboxidovorans (strain ATCC 49405 / DSM 1227 / KCTC 32145 / OM5) (Oligotropha carboxidovorans).